A 342-amino-acid polypeptide reads, in one-letter code: Ferredoxin--NADP reductase (342 aa).

Residues Cys17, Asp36, Gln44, Tyr49, Ile89, Phe124, Asp289, and Thr330 each coordinate FAD.

Belongs to the ferredoxin--NADP reductase type 2 family. In terms of assembly, homodimer. FAD is required as a cofactor.

It catalyses the reaction 2 reduced [2Fe-2S]-[ferredoxin] + NADP(+) + H(+) = 2 oxidized [2Fe-2S]-[ferredoxin] + NADPH. This chain is Ferredoxin--NADP reductase, found in Rhodopseudomonas palustris (strain BisB5).